The following is a 250-amino-acid chain: Small ribosomal subunit protein uS3 (250 aa).

The region spanning 39-107 (VREFLTKKLK…PAQVSINEID (69 aa)) is the KH type-2 domain. Residues 215–250 (MNPAPAEERPAKRGRGRGEGQERRGRRGDRAADKGE) are disordered. Residues 220-250 (AEERPAKRGRGRGEGQERRGRRGDRAADKGE) are compositionally biased toward basic and acidic residues.

Belongs to the universal ribosomal protein uS3 family. As to quaternary structure, part of the 30S ribosomal subunit. Forms a tight complex with proteins S10 and S14.

Functionally, binds the lower part of the 30S subunit head. Binds mRNA in the 70S ribosome, positioning it for translation. The protein is Small ribosomal subunit protein uS3 of Acinetobacter baumannii (strain SDF).